We begin with the raw amino-acid sequence, 305 residues long: Ribosomal RNA small subunit methyltransferase H (305 aa).

S-adenosyl-L-methionine contacts are provided by residues 30-32 (GGH), Asp-49, Phe-74, Asp-96, and Gln-103.

The protein belongs to the methyltransferase superfamily. RsmH family.

Its subcellular location is the cytoplasm. It carries out the reaction cytidine(1402) in 16S rRNA + S-adenosyl-L-methionine = N(4)-methylcytidine(1402) in 16S rRNA + S-adenosyl-L-homocysteine + H(+). In terms of biological role, specifically methylates the N4 position of cytidine in position 1402 (C1402) of 16S rRNA. This chain is Ribosomal RNA small subunit methyltransferase H, found in Francisella tularensis subsp. tularensis (strain FSC 198).